The following is a 323-amino-acid chain: Methenyltetrahydromethanopterin cyclohydrolase (323 aa).

The protein belongs to the MCH family.

It is found in the cytoplasm. The catalysed reaction is 5,10-methenyl-5,6,7,8-tetrahydromethanopterin + H2O = N(5)-formyl-5,6,7,8-tetrahydromethanopterin + H(+). It participates in one-carbon metabolism; methanogenesis from CO(2); 5,10-methenyl-5,6,7,8-tetrahydromethanopterin from CO(2): step 3/3. Its function is as follows. Catalyzes the reversible interconversion of 5-formyl-H(4)MPT to methenyl-H(4)MPT(+). The sequence is that of Methenyltetrahydromethanopterin cyclohydrolase from Methanococcus vannielii (strain ATCC 35089 / DSM 1224 / JCM 13029 / OCM 148 / SB).